Here is a 283-residue protein sequence, read N- to C-terminus: SNF1-related protein kinase regulatory subunit beta-1 (283 aa).

Over residues 1 to 10 (MGNANGKDED) the composition is skewed to basic and acidic residues. A disordered region spans residues 1–63 (MGNANGKDED…PARSPSPFLF (63 aa)). Residue Gly-2 is the site of N-myristoyl glycine attachment. The segment covering 43–60 (SDSMSSSPPGSPARSPSP) has biased composition (low complexity). The tract at residues 101-178 (PTIITWNQGG…VGNVCNILDV (78 aa)) is kinase-interacting sequence (KIS). Residues 215–283 (EPLAVPPQLH…TVVLYKPLTR (69 aa)) form an association with SNF1 complex (ASC) region.

This sequence belongs to the 5'-AMP-activated protein kinase beta subunit family. As to quaternary structure, subunit of a probable heterotrimeric complex consisting of an alpha catalytic (KIN10 or KIN11) subunit, and a beta (KINB) and a gamma (KING or SNF4) non-catalytic regulatory subunits. Interacts with SNF4 and CBL1. Interacts with FLZ1, FLZ2, FLZ8, FLZ9, FLZ10, FLZ12, FLZ13, FLZ14 and FLZ15. Sumoylated by SIZ1. In terms of tissue distribution, expressed in vegetative organs and, to lower extent, in reproductive organs.

It localises to the cell membrane. Its function is as follows. Regulatory subunit of the probable trimeric SNF1-related protein kinase (SnRK) complex, which may play a role in a signal transduction cascade regulating gene expression and carbohydrate metabolism in higher plants. The SnRK complex may also be involved in the regulation of fatty acid synthesis by phosphorylation of acetyl-CoA carboxylase and in assimilation of nitrogen by phosphorylating nitrate reductase. This chain is SNF1-related protein kinase regulatory subunit beta-1 (KINB1), found in Arabidopsis thaliana (Mouse-ear cress).